A 437-amino-acid polypeptide reads, in one-letter code: MMGAEKAEGMEELELEEGGGSPSPSPMTAAGKMQALDFEHIGSLAAVAESLSTGSKWRRALTSVRVVILQAKINVLLPFGPLAVMLHYLSANHQGWVFLFSLIGITPLAERLGYATEQLALYTGPTIGGLLNATFGNATEMIISLYALKNGMIRVVQQSLLGSILSNMLLVLGCAFFAGGLVHPSRDQVFNKASAVVNSGLLLMAVLGLMFPAVLHFTHSEVQYGKSEVSLSRFSSCIMLVAYASYLFFQLKSQRSLYSPIGEQEEEVTEDEEEEKEITQGEAICWLFVLTIWISILSGYLVDAIQGASESLNMPVAFISVILLPIVGNAAEHASAIMFAMKDKLDITLGVAIGSSTQISMFVIPFCVVIGWIMGQQMDLNFQLFETATLFITVLVVAFMLQEGTSNYFKGLMLILCYLIVAASFFVHVDPDSSNNK.

A disordered region spans residues 1–29; sequence MMGAEKAEGMEELELEEGGGSPSPSPMTA. Residues 1 to 65 are Cytoplasmic-facing; sequence MMGAEKAEGM…KWRRALTSVR (65 aa). A helical transmembrane segment spans residues 66–86; the sequence is VVILQAKINVLLPFGPLAVML. At 87 to 88 the chain is on the extracellular side; the sequence is HY. A helical membrane pass occupies residues 89-109; it reads LSANHQGWVFLFSLIGITPLA. The Cytoplasmic portion of the chain corresponds to 110 to 126; it reads ERLGYATEQLALYTGPT. Residues 127–147 form a helical membrane-spanning segment; sequence IGGLLNATFGNATEMIISLYA. Positions 136-171 are cation selection; the sequence is GNATEMIISLYALKNGMIRVVQQSLLGSILSNMLLV. The Extracellular portion of the chain corresponds to 148 to 161; the sequence is LKNGMIRVVQQSLL. A helical membrane pass occupies residues 162 to 182; sequence GSILSNMLLVLGCAFFAGGLV. At 183-194 the chain is on the cytoplasmic side; sequence HPSRDQVFNKAS. The chain crosses the membrane as a helical span at residues 195-215; it reads AVVNSGLLLMAVLGLMFPAVL. The Extracellular portion of the chain corresponds to 216–228; the sequence is HFTHSEVQYGKSE. Residues 229-249 traverse the membrane as a helical segment; the sequence is VSLSRFSSCIMLVAYASYLFF. Over 250 to 281 the chain is Cytoplasmic; that stretch reads QLKSQRSLYSPIGEQEEEVTEDEEEEKEITQG. Residues 282–302 form a helical membrane-spanning segment; that stretch reads EAICWLFVLTIWISILSGYLV. Residues 303 to 310 lie on the Extracellular side of the membrane; that stretch reads DAIQGASE. The helical transmembrane segment at 311–331 threads the bilayer; that stretch reads SLNMPVAFISVILLPIVGNAA. The segment at 328 to 363 is cation selection; the sequence is GNAAEHASAIMFAMKDKLDITLGVAIGSSTQISMFV. At 332–352 the chain is on the cytoplasmic side; the sequence is EHASAIMFAMKDKLDITLGVA. A helical transmembrane segment spans residues 353-373; it reads IGSSTQISMFVIPFCVVIGWI. The Extracellular portion of the chain corresponds to 374-379; that stretch reads MGQQMD. The helical transmembrane segment at 380 to 400 threads the bilayer; it reads LNFQLFETATLFITVLVVAFM. The Cytoplasmic segment spans residues 401–408; sequence LQEGTSNY. Residues 409–429 form a helical membrane-spanning segment; it reads FKGLMLILCYLIVAASFFVHV. The Extracellular segment spans residues 430-437; it reads DPDSSNNK.

The protein belongs to the Ca(2+):cation antiporter (CaCA) (TC 2.A.19) family. Cation/proton exchanger (CAX) subfamily. As to expression, expressed in roots and shoots.

The protein resides in the vacuole membrane. Vacuolar cation/proton exchanger (CAX). Translocates Ca(2+) and other metal ions into vacuoles using the proton gradient formed by H(+)-ATPase and H(+)-pyrophosphatase. The protein is Vacuolar cation/proton exchanger 2 (CAX2) of Oryza sativa subsp. japonica (Rice).